The primary structure comprises 397 residues: Putative 8-amino-7-oxononanoate synthase (397 aa).

Arginine 22 serves as a coordination point for substrate. 109 to 110 (GW) provides a ligand contact to pyridoxal 5'-phosphate. Histidine 139 contacts substrate. Residues serine 187, 212 to 215 (DEAH), and 241 to 244 (TFSK) each bind pyridoxal 5'-phosphate. At lysine 244 the chain carries N6-(pyridoxal phosphate)lysine. Threonine 358 contributes to the substrate binding site.

The protein belongs to the class-II pyridoxal-phosphate-dependent aminotransferase family. BioF subfamily. Homodimer. Requires pyridoxal 5'-phosphate as cofactor.

The catalysed reaction is 6-carboxyhexanoyl-[ACP] + L-alanine + H(+) = (8S)-8-amino-7-oxononanoate + holo-[ACP] + CO2. It functions in the pathway cofactor biosynthesis; biotin biosynthesis. Functionally, catalyzes the decarboxylative condensation of pimeloyl-[acyl-carrier protein] and L-alanine to produce 8-amino-7-oxononanoate (AON), [acyl-carrier protein], and carbon dioxide. This is Putative 8-amino-7-oxononanoate synthase (bioF) from Bordetella pertussis (strain Tohama I / ATCC BAA-589 / NCTC 13251).